Here is a 760-residue protein sequence, read N- to C-terminus: Catalase-peroxidase (760 aa).

Positions 1–57 (MTDSQDNRTPESPQGVDRKAEGGCPVLHDGVTAQGSESENPAIDSPTPRTGGRPNSL) are disordered. A cross-link (tryptophyl-tyrosyl-methioninium (Trp-Tyr) (with M-277)) is located at residues 129 to 251 (WHAAGTYRIH…LGAVQMGLIY (123 aa)). The active-site Proton acceptor is the His130. The tryptophyl-tyrosyl-methioninium (Tyr-Met) (with W-129) cross-link spans 251 to 277 (YVNPEGPNGNPDPLASARDIRETFARM). His292 lines the heme b pocket.

Belongs to the peroxidase family. Peroxidase/catalase subfamily. Homodimer or homotetramer. Requires heme b as cofactor. Formation of the three residue Trp-Tyr-Met cross-link is important for the catalase, but not the peroxidase activity of the enzyme.

It catalyses the reaction H2O2 + AH2 = A + 2 H2O. The enzyme catalyses 2 H2O2 = O2 + 2 H2O. Bifunctional enzyme with both catalase and broad-spectrum peroxidase activity. The sequence is that of Catalase-peroxidase from Nocardioides sp. (strain ATCC BAA-499 / JS614).